A 373-amino-acid chain; its full sequence is tRNA-specific 2-thiouridylase MnmA (373 aa).

ATP contacts are provided by residues 12-19 and Met-38; that span reads GMSGGVDS. The interaction with target base in tRNA stretch occupies residues 98–100; that stretch reads NPD. Catalysis depends on Cys-103, which acts as the Nucleophile. The cysteines at positions 103 and 200 are disulfide-linked. Gly-127 serves as a coordination point for ATP. The interval 150–152 is interaction with tRNA; sequence KDQ. The active-site Cysteine persulfide intermediate is the Cys-200. The segment at 312–313 is interaction with tRNA; the sequence is RY.

This sequence belongs to the MnmA/TRMU family.

The protein localises to the cytoplasm. The catalysed reaction is S-sulfanyl-L-cysteinyl-[protein] + uridine(34) in tRNA + AH2 + ATP = 2-thiouridine(34) in tRNA + L-cysteinyl-[protein] + A + AMP + diphosphate + H(+). In terms of biological role, catalyzes the 2-thiolation of uridine at the wobble position (U34) of tRNA, leading to the formation of s(2)U34. In Streptococcus sanguinis (strain SK36), this protein is tRNA-specific 2-thiouridylase MnmA.